Reading from the N-terminus, the 23-residue chain is Basic phospholipase A2 CTs-G6 (23 aa).

The cofactor is Ca(2+). Contains 7 disulfide bonds. As to expression, expressed by the venom gland.

It is found in the secreted. It carries out the reaction a 1,2-diacyl-sn-glycero-3-phosphocholine + H2O = a 1-acyl-sn-glycero-3-phosphocholine + a fatty acid + H(+). Functionally, snake venom phospholipase A2 (PLA2) that induces local edema a few hours after injection (5-10 ug) in the hind paw. PLA2 catalyzes the calcium-dependent hydrolysis of the 2-acyl groups in 3-sn-phosphoglycerides. In Trimeresurus stejnegeri (Chinese green tree viper), this protein is Basic phospholipase A2 CTs-G6.